The primary structure comprises 89 residues: Small ribosomal subunit protein bS20 (89 aa).

The protein belongs to the bacterial ribosomal protein bS20 family.

Binds directly to 16S ribosomal RNA. This is Small ribosomal subunit protein bS20 from Wolbachia sp. subsp. Brugia malayi (strain TRS).